The primary structure comprises 250 residues: Pimeloyl-[acyl-carrier protein] methyl ester esterase (250 aa).

Substrate is bound by residues Trp-12, 71–72 (SL), and 138–142 (FVALQ). Ser-71 acts as the Nucleophile in catalysis. Catalysis depends on residues Asp-202 and His-230. Residue His-230 participates in substrate binding.

This sequence belongs to the AB hydrolase superfamily. Carboxylesterase BioH family. In terms of assembly, monomer.

Its subcellular location is the cytoplasm. The catalysed reaction is 6-carboxyhexanoyl-[ACP] methyl ester + H2O = 6-carboxyhexanoyl-[ACP] + methanol + H(+). It participates in cofactor biosynthesis; biotin biosynthesis. The physiological role of BioH is to remove the methyl group introduced by BioC when the pimeloyl moiety is complete. It allows to synthesize pimeloyl-ACP via the fatty acid synthetic pathway through the hydrolysis of the ester bonds of pimeloyl-ACP esters. The sequence is that of Pimeloyl-[acyl-carrier protein] methyl ester esterase from Aromatoleum aromaticum (strain DSM 19018 / LMG 30748 / EbN1) (Azoarcus sp. (strain EbN1)).